The primary structure comprises 219 residues: Segregation and condensation protein B (219 aa).

Residues 193–219 form a disordered region; it reads SLFAGGEEPSAEAADGGAGESTHGEEE. A compositionally biased stretch (low complexity) spans 196-207; sequence AGGEEPSAEAAD.

It belongs to the ScpB family. Homodimer. Homodimerization may be required to stabilize the binding of ScpA to the Smc head domains. Component of a cohesin-like complex composed of ScpA, ScpB and the Smc homodimer, in which ScpA and ScpB bind to the head domain of Smc. The presence of the three proteins is required for the association of the complex with DNA.

Its subcellular location is the cytoplasm. In terms of biological role, participates in chromosomal partition during cell division. May act via the formation of a condensin-like complex containing Smc and ScpA that pull DNA away from mid-cell into both cell halves. The protein is Segregation and condensation protein B of Symbiobacterium thermophilum (strain DSM 24528 / JCM 14929 / IAM 14863 / T).